The chain runs to 241 residues: 1-(5-phosphoribosyl)-5-[(5-phosphoribosylamino)methylideneamino] imidazole-4-carboxamide isomerase (241 aa).

The active-site Proton acceptor is the D8. D130 serves as the catalytic Proton donor.

It belongs to the HisA/HisF family.

The protein resides in the cytoplasm. It catalyses the reaction 1-(5-phospho-beta-D-ribosyl)-5-[(5-phospho-beta-D-ribosylamino)methylideneamino]imidazole-4-carboxamide = 5-[(5-phospho-1-deoxy-D-ribulos-1-ylimino)methylamino]-1-(5-phospho-beta-D-ribosyl)imidazole-4-carboxamide. It functions in the pathway amino-acid biosynthesis; L-histidine biosynthesis; L-histidine from 5-phospho-alpha-D-ribose 1-diphosphate: step 4/9. This is 1-(5-phosphoribosyl)-5-[(5-phosphoribosylamino)methylideneamino] imidazole-4-carboxamide isomerase from Leptospira borgpetersenii serovar Hardjo-bovis (strain L550).